A 307-amino-acid polypeptide reads, in one-letter code: UDP-N-acetylenolpyruvoylglucosamine reductase (307 aa).

The FAD-binding PCMH-type domain occupies 29-197 (RVGGPAEWFA…LSARFRLDPG (169 aa)). Arg-176 is a catalytic residue. Ser-227 acts as the Proton donor in catalysis. The active site involves Glu-297.

The protein belongs to the MurB family. FAD is required as a cofactor.

Its subcellular location is the cytoplasm. It carries out the reaction UDP-N-acetyl-alpha-D-muramate + NADP(+) = UDP-N-acetyl-3-O-(1-carboxyvinyl)-alpha-D-glucosamine + NADPH + H(+). It participates in cell wall biogenesis; peptidoglycan biosynthesis. In terms of biological role, cell wall formation. This chain is UDP-N-acetylenolpyruvoylglucosamine reductase, found in Prochlorococcus marinus (strain MIT 9313).